We begin with the raw amino-acid sequence, 223 residues long: MASKLLRAVILGPPGSGKGTVCQRIAQNFGLQHLSSGHFLRENIKANTEVGDMAKQYIEKGLLVPDHVITRLMLLELENRRGEHWLLDGFPRTLVQAEALDRLCDLDLVITLNIPFETLKDRLSRRWIHPPSGRVYNLDFNPPHVHGMDDVTGEPLVQQEDDKPEAVAARLRQYKDVAKPVIELYKSRGVLHQFSGTETNKIWPYVYTLFSNKITPVQSKEAY.

15-20 (GSGKGT) is a binding site for a ribonucleoside 5'-triphosphate. The interval 35–64 (SSGHFLRENIKANTEVGDMAKQYIEKGLLV) is NMP. Residues Ser36 and Arg41 each coordinate AMP. Lys60 carries the post-translational modification N6-succinyllysine. AMP is bound by residues 62-64 (LLV), 89-92 (GFPR), and Gln96. The segment at 125–162 (RRWIHPPSGRVYNLDFNPPHVHGMDDVTGEPLVQQEDD) is LID. A ribonucleoside 5'-triphosphate is bound by residues Arg126 and 135 to 136 (VY). Arg170 is a binding site for AMP. Residue Lys175 is modified to N6-acetyllysine. Lys179 and Lys186 each carry N6-acetyllysine; alternate. 2 positions are modified to N6-succinyllysine; alternate: Lys179 and Lys186. Residue Thr199 coordinates a ribonucleoside 5'-triphosphate.

Belongs to the adenylate kinase family. AK3 subfamily. Monomer. Interacts with SLC25A5/ANT2.

Its subcellular location is the mitochondrion matrix. It carries out the reaction a ribonucleoside 5'-phosphate + ATP = a ribonucleoside 5'-diphosphate + ADP. It catalyses the reaction AMP + ATP = 2 ADP. The enzyme catalyses GTP + AMP = GDP + ADP. The catalysed reaction is CMP + ATP = CDP + ADP. It carries out the reaction GTP + CMP = CDP + GDP. It catalyses the reaction dAMP + ATP = dADP + ADP. The enzyme catalyses dCMP + ATP = dCDP + ADP. The catalysed reaction is a 2'-deoxyribonucleoside 5'-diphosphate + ATP = a 2'-deoxyribonucleoside 5'-triphosphate + ADP. It carries out the reaction a ribonucleoside 5'-diphosphate + ATP = a ribonucleoside 5'-triphosphate + ADP. It catalyses the reaction GDP + ATP = GTP + ADP. The enzyme catalyses CDP + GTP = CTP + GDP. The catalysed reaction is CDP + ATP = CTP + ADP. It carries out the reaction UDP + ATP = UTP + ADP. It catalyses the reaction GTP + UDP = UTP + GDP. The enzyme catalyses dADP + GTP = dATP + GDP. The catalysed reaction is dCDP + GTP = dCTP + GDP. It carries out the reaction dCDP + ATP = dCTP + ADP. It catalyses the reaction dGDP + ATP = dGTP + ADP. The enzyme catalyses dTDP + GTP = dTTP + GDP. The catalysed reaction is dTDP + ATP = dTTP + ADP. Its function is as follows. Broad-specificity mitochondrial nucleoside phosphate kinase involved in cellular nucleotide homeostasis by catalyzing nucleoside-phosphate interconversions. Similar to other adenylate kinases, preferentially catalyzes the phosphorylation of the nucleoside monophosphate AMP with ATP as phosphate donor to produce ADP. Phosphorylates only AMP when using GTP as phosphate donor. In vitro, can also catalyze the phosphorylation of CMP, dAMP and dCMP and use GTP as an alternate phosphate donor. Moreover, exhibits a diphosphate kinase activity, producing ATP, CTP, GTP, UTP, TTP, dATP, dCTP and dGTP from the corresponding diphosphate substrates with either ATP or GTP as phosphate donors. Plays a role in controlling cellular ATP levels by regulating phosphorylation and activation of the energy sensor protein kinase AMPK. Plays a protective role in the cellular response to oxidative stress. The sequence is that of Adenylate kinase 4, mitochondrial from Bos taurus (Bovine).